The chain runs to 471 residues: Proline and serine-rich protein 2 (471 aa).

2 disordered regions span residues 1 to 46 (MPGN…SFTM) and 82 to 247 (CDSG…GDHV). A compositionally biased stretch (low complexity) spans 26–43 (LSRGGSLESRCSSSRSRS). At Ser-43 the chain carries Phosphoserine. Thr-45 carries the post-translational modification Phosphothreonine. Residues 90-101 (SPQSLEESPSSH) are compositionally biased toward low complexity. The span at 154–177 (LPPPDSRGPEVFPLPPSLPVPAPS) shows a compositional bias: pro residues. Phosphoserine occurs at positions 187, 220, and 223. Arg-263 is subject to Asymmetric dimethylarginine; alternate. An Omega-N-methylarginine; alternate modification is found at Arg-263. Disordered stretches follow at residues 310–365 (DTSS…TEQP) and 383–437 (PSSF…RAVG). Basic and acidic residues predominate over residues 313-324 (SEERWQKAEEQR). 2 stretches are compositionally biased toward polar residues: residues 354–364 (AQQSRAVQTEQ) and 383–393 (PSSFVPTSKTI). A compositionally biased stretch (basic and acidic residues) spans 415–427 (YEPRPDGSQDARK). Ser-431 carries the post-translational modification Phosphoserine. Position 450 is an omega-N-methylarginine (Arg-450).

This Mus musculus (Mouse) protein is Proline and serine-rich protein 2 (Proser2).